Consider the following 293-residue polypeptide: ESX-3 secretion-associated protein EspG3 (293 aa).

Belongs to the EspG family.

The protein resides in the cytoplasm. This Mycolicibacterium smegmatis (strain ATCC 700084 / mc(2)155) (Mycobacterium smegmatis) protein is ESX-3 secretion-associated protein EspG3.